The following is a 99-amino-acid chain: NADH-quinone oxidoreductase subunit K (99 aa).

Helical transmembrane passes span 3–23 (PDNYLHLSALLFTIGAAGVLL), 28–48 (IVVFMCVELMLNAANLAFVAF), and 59–79 (VVAFFTMVVAACEVVIGLAII).

This sequence belongs to the complex I subunit 4L family. NDH-1 is composed of 14 different subunits. Subunits NuoA, H, J, K, L, M, N constitute the membrane sector of the complex.

The protein resides in the cell membrane. The catalysed reaction is a quinone + NADH + 5 H(+)(in) = a quinol + NAD(+) + 4 H(+)(out). Its function is as follows. NDH-1 shuttles electrons from NADH, via FMN and iron-sulfur (Fe-S) centers, to quinones in the respiratory chain. The immediate electron acceptor for the enzyme in this species is believed to be a menaquinone. Couples the redox reaction to proton translocation (for every two electrons transferred, four hydrogen ions are translocated across the cytoplasmic membrane), and thus conserves the redox energy in a proton gradient. The sequence is that of NADH-quinone oxidoreductase subunit K from Mycobacterium sp. (strain KMS).